Here is an 89-residue protein sequence, read N- to C-terminus: Small ribosomal subunit protein uS15 (89 aa).

The protein belongs to the universal ribosomal protein uS15 family. In terms of assembly, part of the 30S ribosomal subunit. Forms a bridge to the 50S subunit in the 70S ribosome, contacting the 23S rRNA.

In terms of biological role, one of the primary rRNA binding proteins, it binds directly to 16S rRNA where it helps nucleate assembly of the platform of the 30S subunit by binding and bridging several RNA helices of the 16S rRNA. Functionally, forms an intersubunit bridge (bridge B4) with the 23S rRNA of the 50S subunit in the ribosome. The protein is Small ribosomal subunit protein uS15 of Nostoc sp. (strain PCC 7120 / SAG 25.82 / UTEX 2576).